The primary structure comprises 93 residues: NADH-ubiquinone oxidoreductase chain 4L (93 aa).

Transmembrane regions (helical) follow at residues 2–22 (ALYE…GFVL), 27–47 (IILM…LVLV), and 62–82 (IYII…LVAY).

This sequence belongs to the complex I subunit 4L family.

Its subcellular location is the mitochondrion inner membrane. It catalyses the reaction a ubiquinone + NADH + 5 H(+)(in) = a ubiquinol + NAD(+) + 4 H(+)(out). Core subunit of the mitochondrial membrane respiratory chain NADH dehydrogenase (Complex I) that is believed to belong to the minimal assembly required for catalysis. Complex I functions in the transfer of electrons from NADH to the respiratory chain. The immediate electron acceptor for the enzyme is believed to be ubiquinone. The protein is NADH-ubiquinone oxidoreductase chain 4L (ND4L) of Mycosarcoma maydis (Corn smut fungus).